We begin with the raw amino-acid sequence, 480 residues long: Radical SAM Nalpha-GlyT isomerase (480 aa).

Iron-sulfur cluster contacts are provided by Cys-125, Cys-129, and Cys-132. The segment at 457–480 is disordered; sequence KIVEPTPPEEDGGERKIIPITQID.

The catalysed reaction is 5-N(alpha)-glycyl-dTMP in DNA + AH2 + S-adenosyl-L-methionine = 5-C(alpha)-glycyl-dTMP in DNA + 5'-deoxyadenosine + L-methionine + A + H(+). Its function is as follows. Isomerizes 5-N-alpha-glycinylthymidine (Nalpha-GlyT) into 5-Calpha-glycinylthymidine (Calpha-GlyT) as a step in the pathway leading to thymidine hypermodifications in the viral genome. As a final result of the pathway of hypermodification, 5-aminoethyl-2'-deoxyuridine (5-NedU) substitutes for about 30% of thymidines in the viral DNA. These modifications probably prevent degradation of viral genome by the host restriction-modification antiviral defense system. This is Radical SAM Nalpha-GlyT isomerase from Pseudomonas phage M6.